Consider the following 153-residue polypeptide: Nuclear cap-binding protein subunit 2 (153 aa).

MRNA-binding positions include Tyr-17, Tyr-40, 109 to 113 (RTDWD), 120 to 124 (RQYGR), and 130 to 131 (QV). The RRM domain occupies 37–115 (CTLYVGNLSF…RIVRTDWDAG (79 aa)).

It belongs to the RRM NCBP2 family. In terms of assembly, component of the nuclear cap-binding complex (CBC), a heterodimer composed of ncbp1/cbp80 and ncbp2/cbp20 that interacts with m7GpppG-capped RNA.

Its subcellular location is the nucleus. The protein localises to the cytoplasm. In terms of biological role, component of the cap-binding complex (CBC), which binds co-transcriptionally to the 5' cap of pre-mRNAs and is involved in various processes such as pre-mRNA splicing, translation regulation, nonsense-mediated mRNA decay, RNA-mediated gene silencing (RNAi) by microRNAs (miRNAs) and mRNA export. The CBC complex is involved in mRNA export from the nucleus, leading to the recruitment of the mRNA export machinery to the 5' end of mRNA and to mRNA export in a 5' to 3' direction through the nuclear pore. The CBC complex is also involved in mediating U snRNA and intronless mRNAs export from the nucleus. The CBC complex is essential for a pioneer round of mRNA translation, before steady state translation when the CBC complex is replaced by cytoplasmic cap-binding protein eIF4E. The pioneer round of mRNA translation mediated by the CBC complex plays a central role in nonsense-mediated mRNA decay (NMD), NMD only taking place in mRNAs bound to the CBC complex, but not on eIF4E-bound mRNAs. The CBC complex enhances NMD in mRNAs containing at least one exon-junction complex (EJC), promoting the interaction between upf1 and upf2. The CBC complex is also involved in 'failsafe' NMD, which is independent of the EJC complex, while it does not participate in Staufen-mediated mRNA decay (SMD). During cell proliferation, the CBC complex is also involved in microRNAs (miRNAs) biogenesis via its interaction with srrt/ars2, thereby being required for miRNA-mediated RNA interference. The CBC complex also acts as a negative regulator of parn, thereby acting as an inhibitor of mRNA deadenylation. In the CBC complex, ncbp2/cbp20 recognizes and binds capped RNAs (m7GpppG-capped RNA) but requires ncbp1/cbp80 to stabilize the movement of its N-terminal loop and lock the CBC into a high affinity cap-binding state with the cap structure. The conventional cap-binding complex with NCBP2 binds both small nuclear RNA (snRNA) and messenger (mRNA) and is involved in their export from the nucleus. In Xenopus laevis (African clawed frog), this protein is Nuclear cap-binding protein subunit 2 (ncbp2).